The sequence spans 100 residues: Large ribosomal subunit protein bL27 (100 aa).

Residues 1-13 (MNKLYWLTDLQLF) constitute a propeptide that is removed on maturation. Positions 17–39 (KGVGSSKNGRDSNPKYLGAKLGD) are disordered.

This sequence belongs to the bacterial ribosomal protein bL27 family. Post-translationally, the N-terminus is cleaved by ribosomal processing cysteine protease Prp.

In Ureaplasma parvum serovar 3 (strain ATCC 700970), this protein is Large ribosomal subunit protein bL27.